The following is a 250-amino-acid chain: 2,3-bisphosphoglycerate-dependent phosphoglycerate mutase (250 aa).

Substrate-binding positions include 8-15 (RHGESTWN), 21-22 (TG), arginine 60, 87-90 (ERHY), lysine 98, and 114-115 (RR). Histidine 9 serves as the catalytic Tele-phosphohistidine intermediate. Glutamate 87 functions as the Proton donor/acceptor in the catalytic mechanism. The interval 116–135 (SYDTPPPPLAANDPRSERSD) is disordered. 183–184 (GN) serves as a coordination point for substrate.

This sequence belongs to the phosphoglycerate mutase family. BPG-dependent PGAM subfamily. Homodimer.

It carries out the reaction (2R)-2-phosphoglycerate = (2R)-3-phosphoglycerate. Its pathway is carbohydrate degradation; glycolysis; pyruvate from D-glyceraldehyde 3-phosphate: step 3/5. Catalyzes the interconversion of 2-phosphoglycerate and 3-phosphoglycerate. The sequence is that of 2,3-bisphosphoglycerate-dependent phosphoglycerate mutase from Polaromonas naphthalenivorans (strain CJ2).